A 122-amino-acid chain; its full sequence is UPF0102 protein Rleg2_4331 (122 aa).

It belongs to the UPF0102 family.

This chain is UPF0102 protein Rleg2_4331, found in Rhizobium leguminosarum bv. trifolii (strain WSM2304).